The following is a 245-amino-acid chain: tRNA pseudouridine synthase A (245 aa).

Asp52 acts as the Nucleophile in catalysis. Tyr110 provides a ligand contact to substrate.

Belongs to the tRNA pseudouridine synthase TruA family. In terms of assembly, homodimer.

The catalysed reaction is uridine(38/39/40) in tRNA = pseudouridine(38/39/40) in tRNA. Its function is as follows. Formation of pseudouridine at positions 38, 39 and 40 in the anticodon stem and loop of transfer RNAs. This Ruminiclostridium cellulolyticum (strain ATCC 35319 / DSM 5812 / JCM 6584 / H10) (Clostridium cellulolyticum) protein is tRNA pseudouridine synthase A.